The chain runs to 149 residues: MKTNVIIDGDACPVVNSVIELTKGTGIFVTILRSFSHFSQQIQPEHVKIVYVDDGPDAVDYKIVELASNNDIVITQDYGLASLLIDKVHTVMHHKGNIYHSNNIQSLLDQRYLNAQIRRRGGRHKGPPPFTTEDRLKFEHAFRKIINQI.

The protein belongs to the UPF0178 family.

The polypeptide is UPF0178 protein SE_0451 (Staphylococcus epidermidis (strain ATCC 12228 / FDA PCI 1200)).